Here is a 266-residue protein sequence, read N- to C-terminus: tRNA dimethylallyltransferase (266 aa).

It belongs to the IPP transferase family. As to quaternary structure, monomer. Requires Mg(2+) as cofactor.

It catalyses the reaction adenosine(37) in tRNA + dimethylallyl diphosphate = N(6)-dimethylallyladenosine(37) in tRNA + diphosphate. In terms of biological role, catalyzes the transfer of a dimethylallyl group onto the adenine at position 37 in tRNAs that read codons beginning with uridine, leading to the formation of N6-(dimethylallyl)adenosine (i(6)A). The chain is tRNA dimethylallyltransferase (miaA) from Helicobacter acinonychis (strain Sheeba).